Here is a 239-residue protein sequence, read N- to C-terminus: MKVTLFVTCLVDMFETNVGKATVEVLERLGCEIEFPEAQVCCGQPAYNSGHVEAAKEAMKHMIETFEDAEYIVTPSGSCATMFHEYPHVFKDDPKWAKRAQKVADKTYEFTQFIVDVLKVTDVGASLPGIATIHKSCHMTRMLGVKEAPGILLSNVKGLTVRDLPNVQNCCGFGGTFSVKMTPISEQMVDEKVDSVMETGADYLIGADCGCLLNIGGRIERLGKEVKVMHIAEVLNSRS.

This sequence belongs to the LutA/YkgE family.

Functionally, is involved in L-lactate degradation and allows cells to grow with lactate as the sole carbon source. The chain is Lactate utilization protein A from Bacillus cereus (strain B4264).